Reading from the N-terminus, the 300-residue chain is Cell adhesion molecule CEACAM19 (300 aa).

A signal peptide spans 1–32 (MEIPMGTQGCFSKSLLLSASILVLWMLQGSQA). The Extracellular portion of the chain corresponds to 33-157 (ALYIQKIPEQ…PSTHLPTNAG (125 aa)). Asparagine 104 carries an N-linked (GlcNAc...) asparagine glycan. The chain crosses the membrane as a helical span at residues 158–178 (ILAATIIGSLAAGALLISCIA). At 179–300 (YLLVTRNWRG…APYCQLVPTS (122 aa)) the chain is on the cytoplasmic side. The interval 259–291 (SINPARPLPTPPHLQAEPENHQYQQDLLNPDPA) is disordered.

The protein belongs to the immunoglobulin superfamily. CEA family. In terms of tissue distribution, ubiquitous with highest expression in prostate, uterus, fetal brain, mammary gland, adrenal gland, skeletal muscle, small intestine, and kidney, and lower expression in lung, cerebellum, testis, liver, pancreas, bone marrow and ovary.

Its subcellular location is the membrane. The sequence is that of Cell adhesion molecule CEACAM19 from Homo sapiens (Human).